A 389-amino-acid polypeptide reads, in one-letter code: Transcription factor TGAL10 (389 aa).

A disordered region spans residues 80 to 110; the sequence is DDQDNAAALQESPRHASDSFEQEASKPRDKI. Over residues 91-110 the composition is skewed to basic and acidic residues; sequence SPRHASDSFEQEASKPRDKI. The bZIP domain occupies 107–151; that stretch reads RDKIQRRLAQNREAARKSRLRKKAYIQNLETSRMKLAHLEQEITR. Residues 109-129 are basic motif; it reads KIQRRLAQNREAARKSRLRKK. The segment at 135-149 is leucine-zipper; the sequence is LETSRMKLAHLEQEI. The DOG1 domain occupies 176–389; it reads VVTFEVEYAQ…LHVRRRAELG (214 aa). Disordered regions lie at residues 320 to 345 and 370 to 389; these read TSCDASPPPPPPEEEEPSSSAAGDGG and HRRSPPPTSHLHVRRRAELG. The span at 380-389 shows a compositional bias: basic residues; the sequence is LHVRRRAELG.

The protein belongs to the bZIP family.

It localises to the nucleus. Its function is as follows. Transcriptional regulator involved in defense response. The sequence is that of Transcription factor TGAL10 from Oryza sativa subsp. japonica (Rice).